The primary structure comprises 489 residues: Dipeptide and tripeptide permease B (489 aa).

The Cytoplasmic portion of the chain corresponds to 1–27 (MNTTTPMGMLQQPRPFFMIFFVELWER). A helical transmembrane segment spans residues 28–48 (FGYYGVQGVLAVFFVKQLGFS). The Periplasmic portion of the chain corresponds to 49 to 52 (QEQA). Residues 53–73 (FVTFGAFAALVYGLISIGGYV) form a helical membrane-spanning segment. At 74-82 (GDHLLGTKR) the chain is on the cytoplasmic side. A helical membrane pass occupies residues 83 to 103 (TIVLGALVLAIGYFMTGLSLL). At 104-106 (KPD) the chain is on the periplasmic side. A helical membrane pass occupies residues 107-127 (LIFIALGTIAVGNGLFKANPA). The Cytoplasmic portion of the chain corresponds to 128-146 (SLLSKCYPPKAPRLDGAFT). Residues 147–167 (LFYMSINIGSLIALSLAPVIA) traverse the membrane as a helical segment. The Periplasmic segment spans residues 168 to 172 (DRFGY). The chain crosses the membrane as a helical span at residues 173 to 193 (SVTYNLCGAGLIIALLVYIAC). The Cytoplasmic segment spans residues 194–210 (RGMVKDIGSEPDFRPMS). The chain crosses the membrane as a helical span at residues 211 to 231 (FSKLLYVLLGSVVMIFVCAWL). Topologically, residues 232–233 (MH) are periplasmic. Residues 234–254 (NVEVANLVLIVLSIVVTIIFF) traverse the membrane as a helical segment. Residues 255–267 (RQAFKLDKTGRNK) are Cytoplasmic-facing. Residues 268–288 (MFVAFVLMLEAVVFYILYAQM) form a helical membrane-spanning segment. The Periplasmic portion of the chain corresponds to 289-311 (PTSLNFFAINNVHHEILGFSINP). The helical transmembrane segment at 312 to 332 (VSFQALNPFWVVLASPILAGI) threads the bilayer. Topologically, residues 333 to 350 (YTHLGSKGKDLSMPMKFT) are cytoplasmic. Residues 351–371 (LGMFMCSLGFLTAAAAGMWFA) traverse the membrane as a helical segment. The Periplasmic portion of the chain corresponds to 372–380 (DAQGLTSPW). The helical transmembrane segment at 381–401 (FIVLVYLFQSLGELFISALGL) threads the bilayer. Residues 402–411 (AMVAALVPQH) lie on the Cytoplasmic side of the membrane. Residues 412–432 (LMGFILGISFLTQAAAFLLGG) form a helical membrane-spanning segment. The Periplasmic portion of the chain corresponds to 433-456 (YVATFTAVPDNITDPLETLPVYTN). Residues 457 to 477 (VFGKIGLVTLGVAVVMLLMVP) traverse the membrane as a helical segment. Over 478–489 (WLKRMIAAPESH) the chain is Cytoplasmic.

The protein belongs to the major facilitator superfamily. Proton-dependent oligopeptide transporter (POT/PTR) (TC 2.A.17) family. DtpB subfamily.

It is found in the cell inner membrane. Functionally, proton-dependent permease that transports di- and tripeptides. This Shigella dysenteriae serotype 1 (strain Sd197) protein is Dipeptide and tripeptide permease B.